Consider the following 705-residue polypeptide: Dolichyl-diphosphooligosaccharide--protein glycosyltransferase subunit STT3A (705 aa).

Over 1–15 the chain is Cytoplasmic; the sequence is MTKLGFLRLSYEKQD. A helical transmembrane segment spans residues 16–34; it reads TLLKLLILSMAAVLSFSTR. Residues 35-111 lie on the Lumenal side of the membrane; it reads LFAVLRFESV…VLHFFHITID (77 aa). The DXD motif 1 signature appears at 47-49; that stretch reads EFD. Residue Asp49 coordinates Mn(2+). Residues 112 to 141 traverse the membrane as a helical segment; that stretch reads IRNVCVFLAPLFSSFTTIVTYHLTKELKDA. Position 142 (Gly142) is a topological domain, cytoplasmic. The chain crosses the membrane as a helical span at residues 143–158; the sequence is AGLLAAAMIAVVPGYI. The Lumenal portion of the chain corresponds to 159–170; that stretch reads SRSVAGSYDNEG. Mn(2+) is bound by residues Asp167 and Glu169. Positions 167-169 match the DXD motif 2 motif; it reads DNE. A helical membrane pass occupies residues 171 to 188; it reads IAIFCMLLTYYMWIKAVK. Topologically, residues 189–191 are cytoplasmic; the sequence is TGS. A helical membrane pass occupies residues 192-207; that stretch reads IYWAAKCALAYFYMVS. Residues 208-210 are Lumenal-facing; sequence SWG. The chain crosses the membrane as a helical span at residues 211-229; it reads GYVFLINLIPLHVLVLMLT. Topologically, residues 230 to 234 are cytoplasmic; sequence GRFSH. The helical transmembrane segment at 235 to 253 threads the bilayer; the sequence is RIYVAYCTVYCLGTILSMQ. Topologically, residues 254–265 are lumenal; it reads ISFVGFQPVLSS. Residues 266–283 form a helical membrane-spanning segment; the sequence is EHMAAFGVFGLCQIHAFV. The Cytoplasmic portion of the chain corresponds to 284 to 298; it reads DYLRSKLNPQQFEVL. The chain crosses the membrane as a helical span at residues 299–317; that stretch reads FRSVISLVGFVLLTVGALL. The Lumenal segment spans residues 318–356; it reads MLTGKISPWTGRFYSLLDPSYAKNNIPIIASVSEHQPTT. The SVSE motif motif lies at 348-351; it reads SVSE. Residues 357-379 form a helical membrane-spanning segment; that stretch reads WSSYYFDLQLLVFMFPVGLYYCF. The Cytoplasmic portion of the chain corresponds to 380–385; that stretch reads SNLSDA. The chain crosses the membrane as a helical span at residues 386–402; it reads RIFIIMYGVTSMYFSAV. At 403–406 the chain is on the lumenal side; that stretch reads MVRL. Residue Arg405 coordinates dolichyl diphosphooligosaccharide. Residues 407 to 428 traverse the membrane as a helical segment; sequence MLVLAPVMCILSGIGVSQVLST. Over 429–453 the chain is Cytoplasmic; that stretch reads YMKNLDISRPDKKSKKQQDSTYPIK. Residues 454-473 form a helical membrane-spanning segment; it reads NEVASGMILVMAFFLITYTF. Over 474-705 the chain is Lumenal; that stretch reads HSTWVTSEAY…DLDNRGLSRT (232 aa). Residues 525–527 are interacts with target acceptor peptide in protein substrate; that stretch reads WWD. Positions 525 to 529 match the WWDYG motif motif; the sequence is WWDYG. Tyr530 provides a ligand contact to dolichyl diphosphooligosaccharide. Residues Asn537 and Asn544 are each glycosylated (N-linked (GlcNAc...) asparagine). The N-linked (GlcNAc...) (high mannose) asparagine glycan is linked to Asn548. A DK motif motif is present at residues 592-599; sequence DINKFLWM.

This sequence belongs to the STT3 family. Component of the oligosaccharyltransferase (OST) complex. There are 2 OST complexes, OST-A and OST-B, which contain STT3A or STT3B as catalytic subunit, respectively. OST-A and OST-B contain common core subunits RPN1, RPN2, OST48, OST4, DAD1 and TMEM258, and OST-A contains DC2/OSTC and KRTCAP2/KCP2 specific accessory subunits. OST-A complex assembly occurs through the formation of 3 subcomplexes. Subcomplex 1 contains RPN1 and TMEM258, subcomplex 2 contains the OST-A-specific subunits STT3A, DC2/OSTC, and KCP2 as well as the core subunit OST4, and subcomplex 3 contains RPN2, DAD1, and OST48. The OST-A complex can form stable complexes with the Sec61 complex or with both the Sec61 and TRAP complexes. Requires Mg(2+) as cofactor. It depends on Mn(2+) as a cofactor.

The protein localises to the endoplasmic reticulum membrane. The catalysed reaction is a di-trans,poly-cis-dolichyl diphosphooligosaccharide + L-asparaginyl-[protein] = N(4)-(oligosaccharide-(1-&gt;4)-N-acetyl-beta-D-glucosaminyl-(1-&gt;4)-N-acetyl-beta-D-glucosaminyl)-L-asparaginyl-[protein] + a di-trans,poly-cis-dolichyl diphosphate + H(+). The protein operates within protein modification; protein glycosylation. Functionally, catalytic subunit of the oligosaccharyl transferase (OST) complex that catalyzes the initial transfer of a defined glycan (Glc(3)Man(9)GlcNAc(2) in eukaryotes) from the lipid carrier dolichol-pyrophosphate to an asparagine residue within an Asn-X-Ser/Thr consensus motif in nascent polypeptide chains, the first step in protein N-glycosylation. N-glycosylation occurs cotranslationally and the complex associates with the Sec61 complex at the channel-forming translocon complex that mediates protein translocation across the endoplasmic reticulum (ER). All subunits are required for a maximal enzyme activity. This subunit contains the active site and the acceptor peptide and donor lipid-linked oligosaccharide (LLO) binding pockets. STT3A is present in the majority of OST complexes and mediates cotranslational N-glycosylation of most sites on target proteins, while STT3B-containing complexes are required for efficient post-translational glycosylation and mediate glycosylation of sites that have been skipped by STT3A. STT3A-containing OST-A complex is also required to prevent hyperglycosylation of some target proteins by preventing glycosylation of facultative sites before folding of target proteins is completed. The chain is Dolichyl-diphosphooligosaccharide--protein glycosyltransferase subunit STT3A from Canis lupus familiaris (Dog).